The chain runs to 525 residues: Sucrose transport protein (525 aa).

The Cytoplasmic portion of the chain corresponds to 1-37; it reads MAGRNIKNGENNKIAGSSLHLEKNPTTPPEAEATLKK. The next 12 membrane-spanning stretches (helical) occupy residues 38 to 58, 72 to 92, 107 to 127, 145 to 165, 184 to 204, 230 to 250, 295 to 315, 338 to 358, 373 to 393, 422 to 442, 455 to 475, and 488 to 508; these read LGLV…QLSL, WAAY…PLVG, PFIA…GFAA, AIAV…TLQG, YANA…YAAG, SCFF…LSVV, MLIL…FLLF, GVHA…VMSL, LWGI…LVTK, LAIF…PFAL, GLSL…VSVT, and LPAF…SFTL. Residues 509–525 lie on the Cytoplasmic side of the membrane; sequence LPSPPPEAKIGGSMGGH.

The protein belongs to the glycoside-pentoside-hexuronide (GPH) cation symporter transporter (TC 2.A.2.4) family.

The protein localises to the membrane. It functions in the pathway glycan biosynthesis; sucrose metabolism. In terms of biological role, responsible for the transport of sucrose into the cell, with the concomitant uptake of protons (symport system). Can also transport maltose at a lesser rate. The chain is Sucrose transport protein from Spinacia oleracea (Spinach).